Here is a 187-residue protein sequence, read N- to C-terminus: Adenine phosphoribosyltransferase (187 aa).

Residue 133–137 (ATGGS) coordinates AMP.

This sequence belongs to the purine/pyrimidine phosphoribosyltransferase family. Homodimer. The cofactor is Mg(2+).

The protein resides in the cytoplasm. It is found in the nucleus. It carries out the reaction AMP + diphosphate = 5-phospho-alpha-D-ribose 1-diphosphate + adenine. It functions in the pathway purine metabolism; AMP biosynthesis via salvage pathway; AMP from adenine: step 1/1. In terms of biological role, catalyzes a salvage reaction resulting in the formation of AMP, that is energically less costly than de novo synthesis. In Kluyveromyces lactis (strain ATCC 8585 / CBS 2359 / DSM 70799 / NBRC 1267 / NRRL Y-1140 / WM37) (Yeast), this protein is Adenine phosphoribosyltransferase (APT1).